The sequence spans 201 residues: MYB-like transcription factor EOBI (201 aa).

2 HTH myb-type domains span residues 10–62 (DVEV…LNYL) and 63–117 (RPDV…QKHI). DNA-binding regions (H-T-H motif) lie at residues 38–62 (WNSL…LNYL) and 90–113 (WSKI…RTRI). The tract at residues 121–170 (DQNMKKPSKCEQNDQKAISTSQASTGPTDTIDSYSPSSYTENTNNNMENI) is disordered. Positions 135 to 159 (QKAISTSQASTGPTDTIDSYSPSSY) are enriched in polar residues. Residues 160 to 169 (TENTNNNMEN) are compositionally biased toward low complexity.

Expressed exclusively in flower organs. Accumulates mostly in flower limbs, to a lower extent in pistils and flower tubes, and, at low levels, in stamens.

It localises to the nucleus. Its function is as follows. MYB-type transcription factor controlling the production of volatile organic compounds (VOCs), including floral volatile benzenoids and phenylpropanoids (FVBP), in flowers of fragrant cultivars (e.g. cv. Mitchell and cv. V26) by regulating the expression of ODO1, a key regulator of the shikimate pathway, and of several biosynthetic floral scent-related genes (e.g. IGS, EGS, BSMT1, BSMT2, PAL1, PAL2, EPSPS, DAHPS, CS, CM1, ADT1 and PPA-AT). Binds to and activates the promoters of at least ODO1, IGS1 and PAL1. This chain is MYB-like transcription factor EOBI, found in Petunia hybrida (Petunia).